The primary structure comprises 383 residues: Neuropeptide Y receptor type 1 (383 aa).

Residues 1-34 are Extracellular-facing; it reads MNSTSFSQLENHSVHYNLSEEKPSFFAFENDDCH. N-linked (GlcNAc...) asparagine glycosylation is found at asparagine 2, asparagine 11, and asparagine 17. The chain crosses the membrane as a helical span at residues 35-55; the sequence is LPLAVIFTLALAYGAVIILGV. Topologically, residues 56–87 are cytoplasmic; sequence SGNLALILIILKQKEMRNVTNILIVNLSFSDL. The chain crosses the membrane as a helical span at residues 88–108; the sequence is LVAIMCLPFTFVYTLMDHWIF. Residues 109–116 are Extracellular-facing; sequence GEIMCKLN. Cysteines 113 and 198 form a disulfide. A helical membrane pass occupies residues 117 to 137; it reads PFVQCVSITVSIFSLVLIAVE. Residues 138–154 lie on the Cytoplasmic side of the membrane; sequence RHQLIINPRGWRPNNRH. Residues 155 to 175 form a helical membrane-spanning segment; that stretch reads AYIGIAVIWVLAVASSLPFMI. At 176–211 the chain is on the extracellular side; that stretch reads YQVLTDEPFQNVTLDAFKDKLVCFDQFPSDSHRLSY. A helical membrane pass occupies residues 212 to 232; sequence TTLLLVLQYFGPLCFIFICYF. Residues 233–260 are Cytoplasmic-facing; the sequence is KIYIRLKRRNNMMDKMRDSKYRSSESKR. Residues 261-281 form a helical membrane-spanning segment; the sequence is INIMLLSIVVAFAVCWLPLTI. Residues 282-299 are Extracellular-facing; sequence FNTVFDWNHQIIATCNHN. Residues 300 to 320 form a helical membrane-spanning segment; the sequence is LLFLLCHLTAMISTCVNPIFY. Over 321–383 the chain is Cytoplasmic; the sequence is GFLNKNFQRD…KISCVENEKI (63 aa). Cysteine 338 carries the S-palmitoyl cysteine lipid modification. Phosphoserine is present on residues serine 368 and serine 376.

The protein belongs to the G-protein coupled receptor 1 family.

It is found in the cell membrane. Its function is as follows. Receptor for neuropeptide Y and peptide YY. The polypeptide is Neuropeptide Y receptor type 1 (NPY1R) (Cavia porcellus (Guinea pig)).